A 254-amino-acid chain; its full sequence is Isoprenyl transferase (254 aa).

The active site involves D24. D24 is a binding site for Mg(2+). Substrate contacts are provided by residues 25 to 28 (GNGR), W29, R37, H41, and 69 to 71 (SSE). N72 serves as the catalytic Proton acceptor. Substrate-binding positions include W73, R75, R192, and 198-200 (RIS). E211 lines the Mg(2+) pocket.

The protein belongs to the UPP synthase family. Homodimer. Mg(2+) is required as a cofactor.

Its function is as follows. Catalyzes the condensation of isopentenyl diphosphate (IPP) with allylic pyrophosphates generating different type of terpenoids. The chain is Isoprenyl transferase from Bordetella parapertussis (strain 12822 / ATCC BAA-587 / NCTC 13253).